The chain runs to 780 residues: Nuclear cap-binding protein subunit 1 (780 aa).

Residues 1–25 form a disordered region; that stretch reads MSSYRGSTRPRKRTREGENYGFRPH. Ser29 is modified (phosphoserine). One can recognise an MIF4G domain in the interval 34-249; the sequence is AARIKKDITF…KQLILSREND (216 aa). The tract at residues 738–780 is disordered; the sequence is ANEPVQENTSEEQEDTKMQPVDAVDEQPSENNQTAADATNEEK.

It belongs to the NCBP1 family. As to quaternary structure, component of the nuclear cap-binding complex (CBC), a heterodimer composed of cbc1 and cbc2 that interacts with capped RNAs.

The protein resides in the cytoplasm. It is found in the perinuclear region. It localises to the nucleus. Component of the CBC complex, which binds cotranscriptionally to the 5'-cap of pre-mRNAs and is involved in maturation, export and degradation of nuclear mRNAs. In Schizosaccharomyces pombe (strain 972 / ATCC 24843) (Fission yeast), this protein is Nuclear cap-binding protein subunit 1 (cbc1).